Consider the following 241-residue polypeptide: UPF0280 protein MK0206 (241 aa).

It belongs to the UPF0280 family.

The chain is UPF0280 protein MK0206 from Methanopyrus kandleri (strain AV19 / DSM 6324 / JCM 9639 / NBRC 100938).